The primary structure comprises 677 residues: Secretogranin-1 (677 aa).

The N-terminal stretch at 1–20 (MQPTLLLSLLGAVGLAAVNS) is a signal peptide. A disulfide bridge links cysteine 36 with cysteine 57. Composition is skewed to basic and acidic residues over residues 64–100 (SRKDVKDKETTENENTKFEVRLLRDPADASEAHESSS) and 118–136 (ADTEKWAEGGGHSRERADE). The segment at 64-463 (SRKDVKDKET…DKARRHPQGA (400 aa)) is disordered. Threonine 79 is modified (phosphothreonine). Phosphoserine occurs at positions 93, 99, and 100. An O-linked (Xyl...) (chondroitin sulfate) serine glycan is attached at serine 93. The interval 116–120 (TKADT) is O-glycosylated at one site. Serine 130 bears the Phosphoserine; by FAM20C mark. At serine 149 the chain carries Phosphoserine. Basic and acidic residues-rich tracts occupy residues 150–162 (EEVKTRHSEKSQR), 172–190 (NYQKGERGEDSSEEKHLEE), and 200–236 (NERKQASAIKKEELVARSETHAAGHSQEKTHSREKSS). The residue at position 183 (serine 183) is a Phosphoserine. The residue at position 225 (serine 225) is a Phosphoserine; by FAM20C. Serine 239 is a glycosylation site (O-linked (Xyl...) (chondroitin sulfate) serine). 2 positions are modified to phosphoserine: serine 259 and serine 263. Acidic residues predominate over residues 262-272 (ESEEGEEDATS). Residues 277–287 (RRTRPRHHHGR) are compositionally biased toward basic residues. A phosphoserine mark is found at serine 293, serine 294, serine 311, and serine 335. Tyrosine 341 carries the post-translational modification Sulfotyrosine. The span at 359–372 (WERYRGRGSEEYRA) shows a compositional bias: basic and acidic residues. 3 positions are modified to phosphoserine; by FAM20C: serine 367, serine 377, and serine 380. 2 stretches are compositionally biased toward basic and acidic residues: residues 384–415 (EDKRNYPSLELDKMAHGYGEESEEERGLEPGK) and 433–455 (DTREEKRFLGEGHHRVQENQMDK). Tyrosine 401 bears the Phosphotyrosine mark. Serine 405 is modified (phosphoserine). Tyrosine 474 bears the Sulfotyrosine mark. The disordered stretch occupies residues 475–512 (GEEGAPGKWQQQGDLQDTKENREEARFQDKQYSSHHTA). Residues 490–503 (QDTKENREEARFQD) are compositionally biased toward basic and acidic residues. Residues serine 533 and serine 534 each carry the phosphoserine modification. Sulfotyrosine is present on tyrosine 566. Serine 617 carries the post-translational modification Phosphoserine. Positions 622–653 (DFYDSEEPVSTHQEAENEKDRADQTVLTEDEK) are disordered. At tyrosine 624 the chain carries Sulfotyrosine. Phosphoserine is present on residues serine 626 and serine 631. The segment covering 634–653 (QEAENEKDRADQTVLTEDEK) has biased composition (basic and acidic residues).

The protein belongs to the chromogranin/secretogranin protein family. Interacts with ITPR1 in the secretory granules. Post-translationally, extensively processed by limited proteolysis at conserved basic residues. Alternative processing are seen in different tissues. O-glycosylated. Detected in cerebrospinal fluid and urine (at protein level). Expressed in the adrenal medulla, and in pheochromocytoma. Not expressed in liver.

Its subcellular location is the secreted. Functionally, secretogranin-1 is a neuroendocrine secretory granule protein, which may be the precursor for other biologically active peptides. The protein is Secretogranin-1 (CHGB) of Homo sapiens (Human).